A 379-amino-acid polypeptide reads, in one-letter code: Cytochrome b (379 aa).

The next 4 membrane-spanning stretches (helical) occupy residues 32–52 (FGSL…FLAM), 76–97 (WLIR…YMHI), 112–132 (WNVG…GYVL), and 177–197 (FFAF…IHLL). The heme b site is built by His82 and His96. His181 and His195 together coordinate heme b. His200 provides a ligand contact to a ubiquinone. Transmembrane regions (helical) follow at residues 225 to 245 (YKDL…ALFS), 287 to 307 (LGGV…PFLH), 319 to 339 (LTQI…WIGG), and 346 to 366 (FIII…VLSP).

This sequence belongs to the cytochrome b family. In terms of assembly, the cytochrome bc1 complex contains 3 respiratory subunits (MT-CYB, CYC1 and UQCRFS1), 2 core proteins (UQCRC1 and UQCRC2) and probably 6 low-molecular weight proteins. Heme b is required as a cofactor.

The protein localises to the mitochondrion inner membrane. In terms of biological role, component of the ubiquinol-cytochrome c reductase complex (complex III or cytochrome b-c1 complex) that is part of the mitochondrial respiratory chain. The b-c1 complex mediates electron transfer from ubiquinol to cytochrome c. Contributes to the generation of a proton gradient across the mitochondrial membrane that is then used for ATP synthesis. In Chlorophthalmus agassizi (Shortnose greeneye), this protein is Cytochrome b (mt-cyb).